A 156-amino-acid polypeptide reads, in one-letter code: SsrA-binding protein (156 aa).

The protein belongs to the SmpB family.

The protein resides in the cytoplasm. Required for rescue of stalled ribosomes mediated by trans-translation. Binds to transfer-messenger RNA (tmRNA), required for stable association of tmRNA with ribosomes. tmRNA and SmpB together mimic tRNA shape, replacing the anticodon stem-loop with SmpB. tmRNA is encoded by the ssrA gene; the 2 termini fold to resemble tRNA(Ala) and it encodes a 'tag peptide', a short internal open reading frame. During trans-translation Ala-aminoacylated tmRNA acts like a tRNA, entering the A-site of stalled ribosomes, displacing the stalled mRNA. The ribosome then switches to translate the ORF on the tmRNA; the nascent peptide is terminated with the 'tag peptide' encoded by the tmRNA and targeted for degradation. The ribosome is freed to recommence translation, which seems to be the essential function of trans-translation. This is SsrA-binding protein from Trichodesmium erythraeum (strain IMS101).